The following is a 163-amino-acid chain: Lipoprotein signal peptidase (163 aa).

Transmembrane regions (helical) follow at residues 8–28 (FFLL…YWVM), 61–81 (FSHW…LWLW), and 93–113 (FGFT…ICFY). Catalysis depends on residues Asp117 and Asp136. The chain crosses the membrane as a helical span at residues 128 to 148 (YFAVFNLADTFITLGVIAIII).

Belongs to the peptidase A8 family.

It is found in the cell inner membrane. It catalyses the reaction Release of signal peptides from bacterial membrane prolipoproteins. Hydrolyzes -Xaa-Yaa-Zaa-|-(S,diacylglyceryl)Cys-, in which Xaa is hydrophobic (preferably Leu), and Yaa (Ala or Ser) and Zaa (Gly or Ala) have small, neutral side chains.. It participates in protein modification; lipoprotein biosynthesis (signal peptide cleavage). In terms of biological role, this protein specifically catalyzes the removal of signal peptides from prolipoproteins. The polypeptide is Lipoprotein signal peptidase (Bartonella henselae (strain ATCC 49882 / DSM 28221 / CCUG 30454 / Houston 1) (Rochalimaea henselae)).